The following is a 227-amino-acid chain: Cytochrome c oxidase subunit 2 (227 aa).

Residues 1–14 are Mitochondrial intermembrane-facing; sequence MAYPMQLGFQDATS. The helical transmembrane segment at 15 to 45 threads the bilayer; the sequence is PIMEELLHFHDHTLMIVFLISSLVLYIISLM. The Mitochondrial matrix segment spans residues 46–59; that stretch reads LTTKLTHTSTMDAQ. A helical membrane pass occupies residues 60–87; the sequence is EVETVWTILPAIILIMIALPSLRILYMM. Residues 88–227 lie on the Mitochondrial intermembrane side of the membrane; sequence DEINNPSLTV…YFEKWSASML (140 aa). Positions 161, 196, 198, 200, 204, and 207 each coordinate Cu cation. Glutamate 198 is a binding site for Mg(2+). Residue tyrosine 218 is modified to Phosphotyrosine.

Belongs to the cytochrome c oxidase subunit 2 family. As to quaternary structure, component of the cytochrome c oxidase (complex IV, CIV), a multisubunit enzyme composed of 14 subunits. The complex is composed of a catalytic core of 3 subunits MT-CO1, MT-CO2 and MT-CO3, encoded in the mitochondrial DNA, and 11 supernumerary subunits COX4I, COX5A, COX5B, COX6A, COX6B, COX6C, COX7A, COX7B, COX7C, COX8 and NDUFA4, which are encoded in the nuclear genome. The complex exists as a monomer or a dimer and forms supercomplexes (SCs) in the inner mitochondrial membrane with NADH-ubiquinone oxidoreductase (complex I, CI) and ubiquinol-cytochrome c oxidoreductase (cytochrome b-c1 complex, complex III, CIII), resulting in different assemblies (supercomplex SCI(1)III(2)IV(1) and megacomplex MCI(2)III(2)IV(2)). Found in a complex with TMEM177, COA6, COX18, COX20, SCO1 and SCO2. Interacts with TMEM177 in a COX20-dependent manner. Interacts with COX20. Interacts with COX16. Cu cation serves as cofactor.

It localises to the mitochondrion inner membrane. The enzyme catalyses 4 Fe(II)-[cytochrome c] + O2 + 8 H(+)(in) = 4 Fe(III)-[cytochrome c] + 2 H2O + 4 H(+)(out). In terms of biological role, component of the cytochrome c oxidase, the last enzyme in the mitochondrial electron transport chain which drives oxidative phosphorylation. The respiratory chain contains 3 multisubunit complexes succinate dehydrogenase (complex II, CII), ubiquinol-cytochrome c oxidoreductase (cytochrome b-c1 complex, complex III, CIII) and cytochrome c oxidase (complex IV, CIV), that cooperate to transfer electrons derived from NADH and succinate to molecular oxygen, creating an electrochemical gradient over the inner membrane that drives transmembrane transport and the ATP synthase. Cytochrome c oxidase is the component of the respiratory chain that catalyzes the reduction of oxygen to water. Electrons originating from reduced cytochrome c in the intermembrane space (IMS) are transferred via the dinuclear copper A center (CU(A)) of subunit 2 and heme A of subunit 1 to the active site in subunit 1, a binuclear center (BNC) formed by heme A3 and copper B (CU(B)). The BNC reduces molecular oxygen to 2 water molecules using 4 electrons from cytochrome c in the IMS and 4 protons from the mitochondrial matrix. The polypeptide is Cytochrome c oxidase subunit 2 (MT-CO2) (Capra hircus (Goat)).